A 424-amino-acid chain; its full sequence is Protein CLP1 homolog (424 aa).

Residues Glu19, Lys60, and 122–127 (DVGKST) contribute to the ATP site.

Belongs to the Clp1 family. Clp1 subfamily.

The protein resides in the nucleus. In terms of biological role, required for endonucleolytic cleavage during polyadenylation-dependent pre-mRNA 3'-end formation. This Aedes aegypti (Yellowfever mosquito) protein is Protein CLP1 homolog (cbc).